We begin with the raw amino-acid sequence, 767 residues long: Transducin-like enhancer protein 2 (767 aa).

The tract at residues 1-152 (MYPQGRHPTP…SLLGQQNQLQ (152 aa)) is q domain. Positions 153 to 215 (PLSHAPPVPL…SRVDRAASRS (63 aa)) are GP domain. Over residues 198–212 (RVGVDAEGSRVDRAA) the composition is skewed to basic and acidic residues. Disordered stretches follow at residues 198–257 (RVGV…EEDK), 264–283 (VDED…CGKA), and 296–346 (SPAS…SSAS). The tract at residues 216–279 (SSPSPPESLV…SEPPSPVTTP (64 aa)) is ccN domain. The Nuclear localization signal signature appears at 238-242 (KQQRA). Ser253 carries the phosphoserine; by CK2 modification. The residue at position 274 (Ser274) is a Phosphoserine; by CDK1. Thr278 carries the post-translational modification Phosphothreonine; by CDK1. An SP domain region spans residues 280 to 447 (CGKAPLCIPA…VAKPAYSFHV (168 aa)). Low complexity predominate over residues 296–309 (SPASLASSLGSPLP). Ser306 bears the Phosphoserine mark. Positions 323 to 346 (TPASRSCGTSPPQDSSTPGPSSAS) are enriched in polar residues. WD repeat units follow at residues 479–517 (AHGE…SKTP), 525–564 (NRDN…PRIK), 569–608 (SSAP…MVRQ), 611–650 (GHTD…QLQQ), 693–732 (LHES…SIFQ), and 734–766 (KESS…YEVV).

Belongs to the WD repeat Groucho/TLE family. Homooligomer and heterooligomer with other family members. Binds LEF1, TCF7, TCF7L1, TCF7L2, UTY, HES1 and HES5. Ubiquitinated by XIAP/BIRC4. As to expression, expressed in bone marrow-derived macrophages.

The protein resides in the nucleus. Its function is as follows. Transcriptional corepressor that binds to a number of transcription factors. Inhibits the transcriptional activation mediated by CTNNB1 and TCF family members in Wnt signaling. The effects of full-length TLE family members may be modulated by association with dominant-negative AES. In Mus musculus (Mouse), this protein is Transducin-like enhancer protein 2 (Tle2).